Here is a 529-residue protein sequence, read N- to C-terminus: MSQQYSYGGGGGAGYPPPQMQPPNSYAQANYQGQPQGAQNQYYNGQQPHHNAPQQYYGNDYKQPLKPEGFEGERLQPKPKFRDPIFLVLFLLVFAGFIALSVICLRSYSNADVNVSIGRANVAGSTLNGHTAIMFMICCAVALVLSFVYILLVRTFPKIILEATLLLTTLSNVAFCVYLWVRGNTAAAIIFTIFAVLSVIAYFFMRKRIPLAKLILVTVIRTAEQYKSVYVVALGGLIVETAFSAWTSWVVVAAYQRFEPSGQAAGSSSSNASIIGIMVFIVFAYYWISEVIKNIAFTTVAGIFGVAYYNANKVANAAWGAFRRSMTYSLGSICFGSLIVAILDLLRALFNILQSQAASDGDMTGQILACVAGCCVSCIQGLVDYFNRYAYINIALYGNGYITAAKETWALLKDRGIDAIINDSLVNIVFNCGAFIIGLLTALFAFIYEQLTNPRYLQNDAGYYSIVLLVAFGLGFNIALSVGAGSIASGVSTYFVALAEDPYILQGKNPELFEMIRQQYPQVVQGVNH.

The disordered stretch occupies residues 1–58 (MSQQYSYGGGGGAGYPPPQMQPPNSYAQANYQGQPQGAQNQYYNGQQPHHNAPQQYYG). Residues 1 to 84 (MSQQYSYGGG…LQPKPKFRDP (84 aa)) are Cytoplasmic-facing. Over residues 22-48 (PPNSYAQANYQGQPQGAQNQYYNGQQP) the composition is skewed to low complexity. A helical transmembrane segment spans residues 85-105 (IFLVLFLLVFAGFIALSVICL). The Extracellular portion of the chain corresponds to 106 to 132 (RSYSNADVNVSIGRANVAGSTLNGHTA). The N-linked (GlcNAc...) asparagine glycan is linked to asparagine 114. Residues 133 to 153 (IMFMICCAVALVLSFVYILLV) traverse the membrane as a helical segment. Residues 154 to 158 (RTFPK) are Cytoplasmic-facing. Residues 159–179 (IILEATLLLTTLSNVAFCVYL) form a helical membrane-spanning segment. The Extracellular portion of the chain corresponds to 180–184 (WVRGN). Residues 185–205 (TAAAIIFTIFAVLSVIAYFFM) traverse the membrane as a helical segment. The Cytoplasmic portion of the chain corresponds to 206 to 230 (RKRIPLAKLILVTVIRTAEQYKSVY). The helical transmembrane segment at 231-251 (VVALGGLIVETAFSAWTSWVV) threads the bilayer. Topologically, residues 252–271 (VAAYQRFEPSGQAAGSSSSN) are extracellular. N-linked (GlcNAc...) asparagine glycosylation is present at asparagine 271. A helical membrane pass occupies residues 272 to 292 (ASIIGIMVFIVFAYYWISEVI). Topologically, residues 293–294 (KN) are cytoplasmic. The helical transmembrane segment at 295–315 (IAFTTVAGIFGVAYYNANKVA) threads the bilayer. The Extracellular segment spans residues 316–325 (NAAWGAFRRS). A helical membrane pass occupies residues 326 to 346 (MTYSLGSICFGSLIVAILDLL). The Cytoplasmic segment spans residues 347-362 (RALFNILQSQAASDGD). The helical transmembrane segment at 363-383 (MTGQILACVAGCCVSCIQGLV) threads the bilayer. Residues 384-427 (DYFNRYAYINIALYGNGYITAAKETWALLKDRGIDAIINDSLVN) lie on the Extracellular side of the membrane. Asparagine 422 carries N-linked (GlcNAc...) asparagine glycosylation. A helical transmembrane segment spans residues 428–448 (IVFNCGAFIIGLLTALFAFIY). The Cytoplasmic portion of the chain corresponds to 449–464 (EQLTNPRYLQNDAGYY). The chain crosses the membrane as a helical span at residues 465 to 485 (SIVLLVAFGLGFNIALSVGAG). Residues 486-529 (SIASGVSTYFVALAEDPYILQGKNPELFEMIRQQYPQVVQGVNH) lie on the Extracellular side of the membrane.

This sequence belongs to the CTL (choline transporter-like) family.

It localises to the cell membrane. In terms of biological role, probably involved in transport through the plasma membrane. This chain is Protein PNS1 (PNS1), found in Mycosarcoma maydis (Corn smut fungus).